The sequence spans 330 residues: Aspartate--ammonia ligase (330 aa).

It belongs to the class-II aminoacyl-tRNA synthetase family. AsnA subfamily.

It localises to the cytoplasm. The catalysed reaction is L-aspartate + NH4(+) + ATP = L-asparagine + AMP + diphosphate + H(+). Its pathway is amino-acid biosynthesis; L-asparagine biosynthesis; L-asparagine from L-aspartate (ammonia route): step 1/1. This chain is Aspartate--ammonia ligase, found in Streptococcus agalactiae serotype III (strain NEM316).